Reading from the N-terminus, the 444-residue chain is Aflatoxin biosynthesis regulatory protein (444 aa).

Positions methionine 1–arginine 26 are disordered. A DNA-binding region (zn(2)-C6 fungal-type) is located at residues cysteine 29–cysteine 56. The tract at residues methionine 64 to glutamine 167 is disordered. Residues threonine 106–proline 116 are compositionally biased toward basic residues. Over residues proline 120 to proline 130 the composition is skewed to low complexity. Polar residues predominate over residues proline 136–glutamine 149.

Interacts with its co-regulator aflS.

Its subcellular location is the nucleus. It is found in the endosome. In terms of biological role, transcription factor involved in regulation of the aflatoxin biosynthesis gene cluster. Binds with its co-regulator aflS to AFLR1 elements (5'-TCGSWNNSCGR-3') present in the promoters of the aflatoxin cluster genes. The ratio of the expression data between aflS:aflR plays a crucial role in the regulation of aflatoxins production. A high ratio, produced at a range between 17 and 30 degrees Celsius, corresponds with the production profile of aflatoxin G1 biosynthesis. A low ratio, produced over 30 degrees Celsius, is related to aflatoxin B1 biosynthesis. This Aspergillus parasiticus (strain ATCC 56775 / NRRL 5862 / SRRC 143 / SU-1) protein is Aflatoxin biosynthesis regulatory protein.